A 247-amino-acid polypeptide reads, in one-letter code: Small ribosomal subunit protein uS3 (247 aa).

One can recognise a KH type-2 domain in the interval 39–109 (IRSMIRSFPE…KVQIKVKEIK (71 aa)). The tract at residues 224 to 247 (RSRRESGQKSDELVRDERTHAERG) is disordered. A compositionally biased stretch (basic and acidic residues) spans 227–247 (RESGQKSDELVRDERTHAERG).

This sequence belongs to the universal ribosomal protein uS3 family. In terms of assembly, part of the 30S ribosomal subunit. Forms a tight complex with proteins S10 and S14.

Binds the lower part of the 30S subunit head. Binds mRNA in the 70S ribosome, positioning it for translation. The chain is Small ribosomal subunit protein uS3 from Treponema pallidum (strain Nichols).